We begin with the raw amino-acid sequence, 391 residues long: Chaperone protein DnaJ (391 aa).

One can recognise a J domain in the interval 6–71; it reads CYYEVLKVER…NKRARYDQYG (66 aa). The CR-type zinc-finger motif lies at 137–215; it reads GCHKDIVFRR…CRGTGTQNEK (79 aa). Positions 150, 153, 167, 170, 189, 192, 203, and 206 each coordinate Zn(2+). 4 CXXCXGXG motif repeats span residues 150–157, 167–174, 189–196, and 203–210; these read CDTCDGSG, CTMCGGQG, CPTCKGAG, and CGKCRGTG. Residues 372-391 are disordered; the sequence is FFDPEPEEAGTGSTDTEKDS.

It belongs to the DnaJ family. Homodimer. The cofactor is Zn(2+).

Its subcellular location is the cytoplasm. Functionally, participates actively in the response to hyperosmotic and heat shock by preventing the aggregation of stress-denatured proteins and by disaggregating proteins, also in an autonomous, DnaK-independent fashion. Unfolded proteins bind initially to DnaJ; upon interaction with the DnaJ-bound protein, DnaK hydrolyzes its bound ATP, resulting in the formation of a stable complex. GrpE releases ADP from DnaK; ATP binding to DnaK triggers the release of the substrate protein, thus completing the reaction cycle. Several rounds of ATP-dependent interactions between DnaJ, DnaK and GrpE are required for fully efficient folding. Also involved, together with DnaK and GrpE, in the DNA replication of plasmids through activation of initiation proteins. The polypeptide is Chaperone protein DnaJ (Rhodopirellula baltica (strain DSM 10527 / NCIMB 13988 / SH1)).